A 159-amino-acid polypeptide reads, in one-letter code: MINYLKSFFLYEIVRGMALTLKYFFKPKVTINYPYEKSPVSPRFKGEHALRRYENGEERCIACKLCEAICPAQAIVIEADERDDGSRRTTRYDIDMTKCIYCGLCQEACPVDAIVEGPNFEFASLTHTALIYDKERLLQNGDRWEQALASKLHKDYEYR.

4Fe-4S ferredoxin-type domains are found at residues 51 to 80 and 90 to 119; these read RRYE…IEAD and TRYD…EGPN. Residues cysteine 60, cysteine 63, cysteine 66, cysteine 70, cysteine 99, cysteine 102, cysteine 105, and cysteine 109 each coordinate [4Fe-4S] cluster.

The protein belongs to the complex I 23 kDa subunit family. In terms of assembly, NDH-1 is composed of 14 different subunits. Subunits NuoA, H, J, K, L, M, N constitute the membrane sector of the complex. [4Fe-4S] cluster is required as a cofactor.

Its subcellular location is the cell inner membrane. The enzyme catalyses a quinone + NADH + 5 H(+)(in) = a quinol + NAD(+) + 4 H(+)(out). NDH-1 shuttles electrons from NADH, via FMN and iron-sulfur (Fe-S) centers, to quinones in the respiratory chain. The immediate electron acceptor for the enzyme in this species is believed to be ubiquinone. Couples the redox reaction to proton translocation (for every two electrons transferred, four hydrogen ions are translocated across the cytoplasmic membrane), and thus conserves the redox energy in a proton gradient. This Rickettsia felis (strain ATCC VR-1525 / URRWXCal2) (Rickettsia azadi) protein is NADH-quinone oxidoreductase subunit I.